A 303-amino-acid chain; its full sequence is Elongation factor Ts (303 aa).

The involved in Mg(2+) ion dislocation from EF-Tu stretch occupies residues 81-84 (TDFV).

This sequence belongs to the EF-Ts family.

The protein localises to the cytoplasm. Functionally, associates with the EF-Tu.GDP complex and induces the exchange of GDP to GTP. It remains bound to the aminoacyl-tRNA.EF-Tu.GTP complex up to the GTP hydrolysis stage on the ribosome. In Mesomycoplasma hyopneumoniae (strain J / ATCC 25934 / NCTC 10110) (Mycoplasma hyopneumoniae), this protein is Elongation factor Ts.